A 75-amino-acid polypeptide reads, in one-letter code: Protein myomixer (75 aa).

Residues 1–5 (MPAVF) lie on the Cytoplasmic side of the membrane. A helical transmembrane segment spans residues 6–28 (LLLRSLVVRLFGSRLAASGVQLL). The Extracellular segment spans residues 29–75 (RRILTTATGHLGTVLRNIWERISSQQSKEAILGCVLCLLNMHKKVDN). The AxLyCxL signature appears at 58–67 (AILGCVLCLL).

Belongs to the MYMX family. Specifically expressed in the developing myotome.

It is found in the cell membrane. Myoblast-specific protein that mediates myoblast fusion, an essential step for the formation of multi-nucleated muscle fibers. Involved in membrane fusion downstream of the lipid mixing step mediated by mymk. Acts by generating membrane stresses via its extracellular C-terminus, leading to drive fusion pore formation. The polypeptide is Protein myomixer (Danio rerio (Zebrafish)).